We begin with the raw amino-acid sequence, 623 residues long: UvrABC system protein C (623 aa).

In terms of domain architecture, GIY-YIG spans 12–91; it reads PSPGVYLMKS…IKQHRPKYNI (80 aa). In terms of domain architecture, UVR spans 201–236; sequence TEVARLYRSKMNLAAEQMRYEDAARYRDLLRAIEVT. A disordered region spans residues 603–623; that stretch reads RLHGSPLPNPPPPGEGAMDRK.

It belongs to the UvrC family. In terms of assembly, interacts with UvrB in an incision complex.

The protein localises to the cytoplasm. In terms of biological role, the UvrABC repair system catalyzes the recognition and processing of DNA lesions. UvrC both incises the 5' and 3' sides of the lesion. The N-terminal half is responsible for the 3' incision and the C-terminal half is responsible for the 5' incision. The polypeptide is UvrABC system protein C (Citrifermentans bemidjiense (strain ATCC BAA-1014 / DSM 16622 / JCM 12645 / Bem) (Geobacter bemidjiensis)).